The chain runs to 176 residues: Inorganic pyrophosphatase (176 aa).

Substrate contacts are provided by K30, R44, and Y56. 3 residues coordinate Mg(2+): D66, D71, and D103. Residue Y142 participates in substrate binding.

It belongs to the PPase family. Homohexamer. Mg(2+) is required as a cofactor.

It localises to the cytoplasm. It catalyses the reaction diphosphate + H2O = 2 phosphate + H(+). Catalyzes the hydrolysis of inorganic pyrophosphate (PPi) forming two phosphate ions. In Vibrio parahaemolyticus serotype O3:K6 (strain RIMD 2210633), this protein is Inorganic pyrophosphatase.